Reading from the N-terminus, the 138-residue chain is MIMKLVSDQIQERKFIIEFQLFNLIDELGLSVKKDHERKIFIYALLYVQLMHQPYSAMNTISQLEPVTTYEKIKISYYTNYLSTYLSTSYSQERERIISIISKTFIDSINPEMNLYNFNDFVTMFAFKKLLQQVFHEN.

In terms of assembly, interacts with PilB but not with TfpB.

Its function is as follows. Acts as a PilB inhibitor to control natural transformation. Inhibits type IV pili (T4P) extension by specifically binding and inhibiting the pilus extension ATPase PilB but not TfpB. This activity probably modulates T4P extension under different environmental conditions. This chain is PilB-specific inhibitory protein CpiA, found in Acinetobacter baylyi (strain ATCC 33305 / BD413 / ADP1).